Reading from the N-terminus, the 331-residue chain is Beta-ketoacyl-[acyl-carrier-protein] synthase III (331 aa).

Catalysis depends on residues cysteine 116 and histidine 256. An ACP-binding region spans residues 257-261 (QANTR). The active site involves asparagine 286.

The protein belongs to the thiolase-like superfamily. FabH family. In terms of assembly, homodimer.

It is found in the cytoplasm. The catalysed reaction is malonyl-[ACP] + acetyl-CoA + H(+) = 3-oxobutanoyl-[ACP] + CO2 + CoA. It functions in the pathway lipid metabolism; fatty acid biosynthesis. In terms of biological role, catalyzes the condensation reaction of fatty acid synthesis by the addition to an acyl acceptor of two carbons from malonyl-ACP. Catalyzes the first condensation reaction which initiates fatty acid synthesis and may therefore play a role in governing the total rate of fatty acid production. Possesses both acetoacetyl-ACP synthase and acetyl transacylase activities. Its substrate specificity determines the biosynthesis of branched-chain and/or straight-chain of fatty acids. This is Beta-ketoacyl-[acyl-carrier-protein] synthase III from Caldanaerobacter subterraneus subsp. tengcongensis (strain DSM 15242 / JCM 11007 / NBRC 100824 / MB4) (Thermoanaerobacter tengcongensis).